A 234-amino-acid chain; its full sequence is Large ribosomal subunit protein uL1 (234 aa).

The protein belongs to the universal ribosomal protein uL1 family. Part of the 50S ribosomal subunit.

Functionally, binds directly to 23S rRNA. The L1 stalk is quite mobile in the ribosome, and is involved in E site tRNA release. Its function is as follows. Protein L1 is also a translational repressor protein, it controls the translation of the L11 operon by binding to its mRNA. The chain is Large ribosomal subunit protein uL1 from Aliivibrio fischeri (strain MJ11) (Vibrio fischeri).